The primary structure comprises 325 residues: MTATVKDELSRLRVAKPCCRRAEMAAMLRFAGGLHIVGGRIVVEAELDTGATARRLRREIAEVFGFPSSVAVLAAGGLRRSVRYIVRVERDGEQLARSTGLLDQRGRPVRGLPPQVVTGSACDAAAAWRGAFLAHGSLTEPGRSCSMEVTSPGPEAALALVGAARRMGVQAKSRDVRGVDRVVVRDGDAIGALLTKIGAHDSLMAWEERRMRREVRATANRLANFDDANLRRSARAAVAAGARVQAAMRILGDDAPDHLLAAGRLRLEHAQASLEELGALADPPLTKDAVAGRIRRLLALADKRANALGIPNTEASVSPELFENA.

The segment at residues 273-306 is a DNA-binding region (H-T-H motif); it reads SLEELGALADPPLTKDAVAGRIRRLLALADKRAN.

It belongs to the WhiA family.

Functionally, involved in cell division and chromosome segregation. The polypeptide is Probable cell division protein WhiA (Parafrankia sp. (strain EAN1pec)).